Consider the following 361-residue polypeptide: Peptide chain release factor 1 (361 aa).

Gln-235 is subject to N5-methylglutamine. The tract at residues 288–307 (AARSADRKDQVGSGDRSERI) is disordered.

It belongs to the prokaryotic/mitochondrial release factor family. In terms of processing, methylated by PrmC. Methylation increases the termination efficiency of RF1.

The protein localises to the cytoplasm. Peptide chain release factor 1 directs the termination of translation in response to the peptide chain termination codons UAG and UAA. The chain is Peptide chain release factor 1 from Nitrobacter hamburgensis (strain DSM 10229 / NCIMB 13809 / X14).